Consider the following 148-residue polypeptide: Large ribosomal subunit protein bL9 (148 aa).

It belongs to the bacterial ribosomal protein bL9 family.

Functionally, binds to the 23S rRNA. The sequence is that of Large ribosomal subunit protein bL9 from Campylobacter concisus (strain 13826).